The primary structure comprises 223 residues: NADH-quinone oxidoreductase subunit C (223 aa).

This sequence belongs to the complex I 30 kDa subunit family. NDH-1 is composed of 14 different subunits. Subunits NuoB, C, D, E, F, and G constitute the peripheral sector of the complex.

The protein resides in the cell inner membrane. The catalysed reaction is a quinone + NADH + 5 H(+)(in) = a quinol + NAD(+) + 4 H(+)(out). NDH-1 shuttles electrons from NADH, via FMN and iron-sulfur (Fe-S) centers, to quinones in the respiratory chain. The immediate electron acceptor for the enzyme in this species is believed to be ubiquinone. Couples the redox reaction to proton translocation (for every two electrons transferred, four hydrogen ions are translocated across the cytoplasmic membrane), and thus conserves the redox energy in a proton gradient. This is NADH-quinone oxidoreductase subunit C from Hydrogenovibrio crunogenus (strain DSM 25203 / XCL-2) (Thiomicrospira crunogena).